Consider the following 81-residue polypeptide: GAMMA-ctenitoxin-Pn1a (81 aa).

An N-terminal signal peptide occupies residues methionine 1–alanine 16. The propeptide occupies serine 17–arginine 34. 5 disulfide bridges follow: cysteine 35–cysteine 49, cysteine 42–cysteine 55, cysteine 46–cysteine 81, cysteine 48–cysteine 65, and cysteine 57–cysteine 63.

This sequence belongs to the neurotoxin 03 (Tx2) family. 05 subfamily. In terms of tissue distribution, expressed by the venom gland.

The protein resides in the secreted. Its function is as follows. This insecticidal neurotoxin targets two types of channels/receptors. It reversibly inhibits the N-methyl-D-aspartate (NMDA)-subtype of ionotropic glutamate receptor (GRIN). It inhibits glutamate uptake from rat brain synaptosomes, and blocks GRIN in hippocampal slices. It also acts on sodium channels of both insects and mammals. On sodium channel insects, it strongly slows down channel inactivation (EC(50)=212.5 nM) and causes an increase (105%) in peak amplitude (at 1 uM) of B.germanica sodium channel (Nav), whereas it inhibits all mammalien sodium channels tested with the following order of potency: Nav1.3/SCN3A (IC(50)=1.5 uM) &gt; Nav1.6/SCN8A &gt; Nav1.5/SCN5A &gt; Nav1.4/SCN4A &gt;= Nav1.2/SCN2A. In vivo, it is highly toxic to house fly (Musca domestica), cockroach (Periplaneta americana), and cricket (Acheta domesticus). In different rat pain models (induced by PGE2, carrageenan or glutamate), it shows antinociceptive effect that may be related to an inhibitory activity on the glutamatergic system. This Phoneutria nigriventer (Brazilian armed spider) protein is GAMMA-ctenitoxin-Pn1a.